The chain runs to 208 residues: Large ribosomal subunit protein uL3c (208 aa).

A disordered region spans residues 129 to 165 (TRGPMTHGSKNHREPGSIGQGSTPGKVHKGKKMAGRL).

Belongs to the universal ribosomal protein uL3 family. Part of the 50S ribosomal subunit.

The protein resides in the plastid. It localises to the chloroplast. Functionally, one of the primary rRNA binding proteins, it binds directly near the 3'-end of the 23S rRNA, where it nucleates assembly of the 50S subunit. The polypeptide is Large ribosomal subunit protein uL3c (rpl3) (Rhodomonas salina (Cryptomonas salina)).